We begin with the raw amino-acid sequence, 557 residues long: NAC domain-containing protein 17 (557 aa).

In terms of domain architecture, NAC spans 16–166 (SAPGFRFHPT…YYALYKLFKK (151 aa)). A DNA-binding region spans residues 115–172 (VGLKKTLVFYRGRAPSGERTDWVMHEYTMDEDELGRCKNPQEYYALYKLFKKSGAGPK). Residues 526-546 (FLLLSIVGALCAIFWVLVATV) traverse the membrane as a helical segment.

As to expression, expressed in roots, rosette leaves, cauline leaves, shoot apex, stems and flowers.

Its subcellular location is the endoplasmic reticulum membrane. The protein resides in the nucleus. In terms of biological role, transcriptional activator activated by proteolytic cleavage through regulated intramembrane proteolysis (RIP). Transcriptional activator that acts as a positive regulator of AOX1A during mitochondrial dysfunction. Binds directly to AOX1A promoter. Mediates mitochondrial retrograde signaling. This chain is NAC domain-containing protein 17, found in Arabidopsis thaliana (Mouse-ear cress).